The chain runs to 460 residues: Cysteine--tRNA ligase (460 aa).

Cysteine 28 provides a ligand contact to Zn(2+). The short motif at 30 to 40 (MTVYDYCHLGH) is the 'HIGH' region element. Cysteine 209, histidine 234, and glutamate 238 together coordinate Zn(2+). Residues 266–270 (KMSKS) carry the 'KMSKS' region motif. Residue lysine 269 participates in ATP binding.

It belongs to the class-I aminoacyl-tRNA synthetase family. Monomer. Zn(2+) serves as cofactor.

The protein resides in the cytoplasm. The enzyme catalyses tRNA(Cys) + L-cysteine + ATP = L-cysteinyl-tRNA(Cys) + AMP + diphosphate. In Pseudomonas aeruginosa (strain LESB58), this protein is Cysteine--tRNA ligase.